The chain runs to 217 residues: Lipid transferase CIDEA (217 aa).

The region spanning 33-110 is the CIDE-N domain; the sequence is PARPFRVSNH…ILEKGQKWTP (78 aa). The interval 163–180 is amphipathic helix; sequence CTSFKAVLRNLLRFMSYA.

This sequence belongs to the CIDE family. As to quaternary structure, homodimer. Interacts with CIDEC. Directly interacts with CEBPB. Interacts with isoform CLSTN3beta of CLSTN3; inhibiting the lipid transferase activity of CIDEA. In terms of tissue distribution, highly expressed in brown adipose tissue and, at lower levels, in white adipose tissue (at protein level). Undetectable in undifferentiated preadipocytes. Expressed in mammary gland during pregnancy and lactation, in epithelial cells, but not in the surrounding adipose tissue. Secreted into milk via milk fat globules.

The protein resides in the lipid droplet. The protein localises to the nucleus. It carries out the reaction a triacyl-sn-glycerol(in) = a triacyl-sn-glycerol(out). In terms of biological role, lipid transferase that promotes unilocular lipid droplet formation by mediating lipid droplet fusion. Lipid droplet fusion promotes their enlargement, restricting lipolysis and favoring lipid storage. Localizes on the lipid droplet surface, at focal contact sites between lipid droplets, and mediates atypical lipid droplet fusion by promoting directional net neutral lipid transfer from the smaller to larger lipid droplets. The transfer direction may be driven by the internal pressure difference between the contacting lipid droplet pair and occurs at a lower rate than that promoted by CIDEC. May also act as a CEBPB coactivator in epithelial cells to control the expression of a subset of CEBPB downstream target genes, including ID2, IGF1, PRLR, SOCS1, SOCS3, XDH, but not casein. By interacting with CEBPB, strengthens the association of CEBPB with the XDH promoter, increases histone acetylation and dissociates HDAC1 from the promoter. When overexpressed, induces apoptosis; the physiological significance of its role in apoptosis is unclear. The sequence is that of Lipid transferase CIDEA from Mus musculus (Mouse).